A 418-amino-acid polypeptide reads, in one-letter code: MEFEFDVHKIFLEPITKLDNNLIPPRRPLISSSEAQKQIMTVIDEIGKASAKAQRLPASITSASRMQANKHHLYILKDCTPKTAGRGAVIGFLKVGYKKLFILDQKGSHIEAEPLCILDFYIHESLQRHGFGKELFSFMLRNEQVDVQHLAIDRPSEKFLSFLRKHFNLWSTIPQVNNFVVFEGFFRDRKASVKKTPAKRTEGEIKPYSLTDRDFLKQEEGLPWPLSQAQINLNRASSLGSSPTRACSRPPPGEEDFVKSLRNCRPHSLQRAASSEQEDHSQRRRTSEMNLSRGLLAQKNGYSRYLSPPPPLLTQGPYAAAQIKEQQSRTDSSAQEGRTQDRPNGSNSQHQNDLISSKQHVQDLHMELAAGRTMSDLKEGQNATKSPWCDHPSYTVLGTVLNAAWVKKKQELRSTRPW.

In terms of domain architecture, N-acetyltransferase spans 1 to 186; it reads MEFEFDVHKI…NNFVVFEGFF (186 aa). Acetyl-CoA contacts are provided by residues 120 to 133 and 156 to 165; these read FYIHESLQRHGFGK and SEKFLSFLRK. Disordered stretches follow at residues 237-292 and 322-353; these read SSLG…MNLS and QIKEQQSRTDSSAQEGRTQDRPNGSNSQHQND. Over residues 277–287 the composition is skewed to basic and acidic residues; the sequence is QEDHSQRRRTS. The span at 329 to 353 shows a compositional bias: polar residues; sequence RTDSSAQEGRTQDRPNGSNSQHQND.

Belongs to the acetyltransferase ATAT1 family.

The protein resides in the cytoplasm. Its subcellular location is the membrane. The protein localises to the clathrin-coated pit. It is found in the cell junction. It localises to the focal adhesion. The protein resides in the cell projection. Its subcellular location is the axon. The protein localises to the cytoskeleton. It is found in the spindle. The catalysed reaction is L-lysyl-[alpha-tubulin] + acetyl-CoA = N(6)-acetyl-L-lysyl-[alpha-tubulin] + CoA + H(+). Functionally, specifically acetylates 'Lys-40' in alpha-tubulin on the lumenal side of microtubules. Promotes microtubule destabilization and accelerates microtubule dynamics; this activity may be independent of acetylation activity. Acetylates alpha-tubulin with a slow enzymatic rate, due to a catalytic site that is not optimized for acetyl transfer. Enters the microtubule through each end and diffuses quickly throughout the lumen of microtubules. Acetylates only long/old microtubules because of its slow acetylation rate since it does not have time to act on dynamically unstable microtubules before the enzyme is released. May be involved in neuron development. The protein is Alpha-tubulin N-acetyltransferase 1 of Xenopus laevis (African clawed frog).